The primary structure comprises 116 residues: Phosphoribosyl-AMP cyclohydrolase (116 aa).

Asp82 is a binding site for Mg(2+). Residue Cys83 coordinates Zn(2+). The Mg(2+) site is built by Asp84 and Asp86. The Zn(2+) site is built by Cys99 and Cys106.

Belongs to the PRA-CH family. As to quaternary structure, homodimer. The cofactor is Mg(2+). Zn(2+) serves as cofactor.

The protein localises to the cytoplasm. It catalyses the reaction 1-(5-phospho-beta-D-ribosyl)-5'-AMP + H2O = 1-(5-phospho-beta-D-ribosyl)-5-[(5-phospho-beta-D-ribosylamino)methylideneamino]imidazole-4-carboxamide. It functions in the pathway amino-acid biosynthesis; L-histidine biosynthesis; L-histidine from 5-phospho-alpha-D-ribose 1-diphosphate: step 3/9. In terms of biological role, catalyzes the hydrolysis of the adenine ring of phosphoribosyl-AMP. This chain is Phosphoribosyl-AMP cyclohydrolase, found in Saccharopolyspora erythraea (strain ATCC 11635 / DSM 40517 / JCM 4748 / NBRC 13426 / NCIMB 8594 / NRRL 2338).